Reading from the N-terminus, the 475-residue chain is Putative F-box protein At3g58960 (475 aa).

The F-box domain maps to 1–49 (MDRISSLSNDIISNIVSFLSAKDAAVASVLSKRWQNIYTIVPNLEFDNT).

The sequence is that of Putative F-box protein At3g58960 from Arabidopsis thaliana (Mouse-ear cress).